Consider the following 124-residue polypeptide: Small ribosomal subunit protein uS12 (124 aa).

Aspartate 89 carries the post-translational modification 3-methylthioaspartic acid.

It belongs to the universal ribosomal protein uS12 family. Part of the 30S ribosomal subunit. Contacts proteins S8 and S17. May interact with IF1 in the 30S initiation complex.

In terms of biological role, with S4 and S5 plays an important role in translational accuracy. Functionally, interacts with and stabilizes bases of the 16S rRNA that are involved in tRNA selection in the A site and with the mRNA backbone. Located at the interface of the 30S and 50S subunits, it traverses the body of the 30S subunit contacting proteins on the other side and probably holding the rRNA structure together. The combined cluster of proteins S8, S12 and S17 appears to hold together the shoulder and platform of the 30S subunit. The protein is Small ribosomal subunit protein uS12 of Hydrogenovibrio crunogenus (strain DSM 25203 / XCL-2) (Thiomicrospira crunogena).